Reading from the N-terminus, the 476-residue chain is Bifunctional protein HldE (476 aa).

Residues 1–319 (MKVSLPAFEK…EALALHHGES (319 aa)) form a ribokinase region. Position 195 to 198 (195 to 198 (NMSE)) interacts with ATP. Asp-264 is an active-site residue. Positions 345–476 (MTNGCFDILH…AIIQNIMANQ (132 aa)) are cytidylyltransferase.

In the N-terminal section; belongs to the carbohydrate kinase PfkB family. This sequence in the C-terminal section; belongs to the cytidylyltransferase family. In terms of assembly, homodimer.

The enzyme catalyses D-glycero-beta-D-manno-heptose 7-phosphate + ATP = D-glycero-beta-D-manno-heptose 1,7-bisphosphate + ADP + H(+). It carries out the reaction D-glycero-beta-D-manno-heptose 1-phosphate + ATP + H(+) = ADP-D-glycero-beta-D-manno-heptose + diphosphate. Its pathway is nucleotide-sugar biosynthesis; ADP-L-glycero-beta-D-manno-heptose biosynthesis; ADP-L-glycero-beta-D-manno-heptose from D-glycero-beta-D-manno-heptose 7-phosphate: step 1/4. It participates in nucleotide-sugar biosynthesis; ADP-L-glycero-beta-D-manno-heptose biosynthesis; ADP-L-glycero-beta-D-manno-heptose from D-glycero-beta-D-manno-heptose 7-phosphate: step 3/4. Functionally, catalyzes the phosphorylation of D-glycero-D-manno-heptose 7-phosphate at the C-1 position to selectively form D-glycero-beta-D-manno-heptose-1,7-bisphosphate. Its function is as follows. Catalyzes the ADP transfer from ATP to D-glycero-beta-D-manno-heptose 1-phosphate, yielding ADP-D-glycero-beta-D-manno-heptose. This is Bifunctional protein HldE from Shewanella sp. (strain W3-18-1).